A 179-amino-acid chain; its full sequence is ATP synthase subunit delta (179 aa).

It belongs to the ATPase delta chain family. In terms of assembly, F-type ATPases have 2 components, F(1) - the catalytic core - and F(0) - the membrane proton channel. F(1) has five subunits: alpha(3), beta(3), gamma(1), delta(1), epsilon(1). F(0) has three main subunits: a(1), b(2) and c(10-14). The alpha and beta chains form an alternating ring which encloses part of the gamma chain. F(1) is attached to F(0) by a central stalk formed by the gamma and epsilon chains, while a peripheral stalk is formed by the delta and b chains.

Its subcellular location is the cell inner membrane. F(1)F(0) ATP synthase produces ATP from ADP in the presence of a proton or sodium gradient. F-type ATPases consist of two structural domains, F(1) containing the extramembraneous catalytic core and F(0) containing the membrane proton channel, linked together by a central stalk and a peripheral stalk. During catalysis, ATP synthesis in the catalytic domain of F(1) is coupled via a rotary mechanism of the central stalk subunits to proton translocation. Functionally, this protein is part of the stalk that links CF(0) to CF(1). It either transmits conformational changes from CF(0) to CF(1) or is implicated in proton conduction. This chain is ATP synthase subunit delta, found in Burkholderia multivorans (strain ATCC 17616 / 249).